A 226-amino-acid chain; its full sequence is Protein transport protein sec20 (226 aa).

Residues 1–189 (MADVLNALEE…IKSLKLSDRS (189 aa)) are Cytoplasmic-facing. Residues 53–75 (LRYEKAVQEYIRLNRRYRNKIAS) adopt a coiled-coil conformation. The residue at position 97 (serine 97) is a Phosphoserine. The chain crosses the membrane as a helical; Anchor for type IV membrane protein span at residues 190–210 (DYFLVVSGFGFFIFVVVYLLF). Topologically, residues 211-226 (KRIVWPILSMFLWFLR) are lumenal.

The protein belongs to the SEC20 family. As to quaternary structure, component of a SNARE complex consisting of ufe1, sec20, sec22 and use1. Interacts with tip20 through its cytoplasmic domain.

The protein resides in the endoplasmic reticulum membrane. Functionally, SNARE required for targeting and fusion of Golgi-derived retrograde transport vesicles with the ER. This Schizosaccharomyces pombe (strain 972 / ATCC 24843) (Fission yeast) protein is Protein transport protein sec20.